The following is a 92-amino-acid chain: Protein S100-A5 (92 aa).

2 EF-hand domains span residues 12 to 47 and 47 to 82; these read MVTT…LGEM and MKES…LCMA. Thr-28, Glu-33, Asp-60, Asn-62, Asp-64, Glu-66, and Glu-71 together coordinate Ca(2+).

The protein belongs to the S-100 family. As to quaternary structure, homodimer.

In terms of biological role, binds calcium, zinc and copper. One subunit can simultaneously bind 2 calcium ions or 2 copper ions plus 1 zinc ion. Calcium and copper ions compete for the same binding sites. This Homo sapiens (Human) protein is Protein S100-A5 (S100A5).